The chain runs to 448 residues: tRNA-2-methylthio-N(6)-dimethylallyladenosine synthase (448 aa).

Residues 2–120 form the MTTase N-terminal domain; sequence KKYRIIVFGC…LPELIGKVIE (119 aa). [4Fe-4S] cluster contacts are provided by Cys11, Cys47, Cys81, Cys158, Cys162, and Cys165. The Radical SAM core domain maps to 144–374; sequence RKEGVRAWVT…IKLQNKISLE (231 aa). The 64-residue stretch at 377–440 folds into the TRAM domain; that stretch reads EEEVGQTQEV…LAHLTGILSY (64 aa).

Belongs to the methylthiotransferase family. MiaB subfamily. As to quaternary structure, monomer. [4Fe-4S] cluster is required as a cofactor.

Its subcellular location is the cytoplasm. The catalysed reaction is N(6)-dimethylallyladenosine(37) in tRNA + (sulfur carrier)-SH + AH2 + 2 S-adenosyl-L-methionine = 2-methylsulfanyl-N(6)-dimethylallyladenosine(37) in tRNA + (sulfur carrier)-H + 5'-deoxyadenosine + L-methionine + A + S-adenosyl-L-homocysteine + 2 H(+). Catalyzes the methylthiolation of N6-(dimethylallyl)adenosine (i(6)A), leading to the formation of 2-methylthio-N6-(dimethylallyl)adenosine (ms(2)i(6)A) at position 37 in tRNAs that read codons beginning with uridine. The chain is tRNA-2-methylthio-N(6)-dimethylallyladenosine synthase from Pelotomaculum thermopropionicum (strain DSM 13744 / JCM 10971 / SI).